The sequence spans 56 residues: Large ribosomal subunit protein bL32 (56 aa).

The interval 1 to 26 is disordered; sequence MAVQQNKKSRSKRGMRRSHDALSTAQ. Positions 7 to 16 are enriched in basic residues; sequence KKSRSKRGMR.

Belongs to the bacterial ribosomal protein bL32 family.

The polypeptide is Large ribosomal subunit protein bL32 (Shewanella baltica (strain OS155 / ATCC BAA-1091)).